We begin with the raw amino-acid sequence, 697 residues long: Ion-translocating oxidoreductase complex subunit C (697 aa).

4Fe-4S ferredoxin-type domains follow at residues 366–397 (AEMG…QQLY) and 407–436 (KARN…VQYY). Cys377, Cys380, Cys383, Cys387, Cys416, Cys419, Cys422, and Cys426 together coordinate [4Fe-4S] cluster. Positions 576-674 (AQLESEPVKS…APEEDPRKAA (99 aa)) are disordered. The segment covering 581 to 596 (EPVKSESEAPEEDPRK) has biased composition (basic and acidic residues). Residues 597 to 615 (AAVAAAIARVKAKKAAQAQ) are compositionally biased toward low complexity. The span at 619–634 (EPVKSESEAPEEDPRK) shows a compositional bias: basic and acidic residues. Residues 635-653 (AAVAAAIARVKAKKAAQAQ) show a composition bias toward low complexity. A compositionally biased stretch (basic and acidic residues) spans 657–672 (EPVKSESEAPEEDPRK).

It belongs to the 4Fe4S bacterial-type ferredoxin family. RnfC subfamily. In terms of assembly, the complex is composed of six subunits: RnfA, RnfB, RnfC, RnfD, RnfE and RnfG. It depends on [4Fe-4S] cluster as a cofactor.

It localises to the cell inner membrane. In terms of biological role, part of a membrane-bound complex that couples electron transfer with translocation of ions across the membrane. This Yersinia enterocolitica serotype O:8 / biotype 1B (strain NCTC 13174 / 8081) protein is Ion-translocating oxidoreductase complex subunit C.